The sequence spans 200 residues: Recombination protein RecR (200 aa).

The segment at 58–73 (CQKCHNISDTTLCSIC) adopts a C4-type zinc-finger fold. One can recognise a Toprim domain in the interval 81-176 (GLICVVENIQ…KLSNIARGVA (96 aa)).

This sequence belongs to the RecR family.

May play a role in DNA repair. It seems to be involved in an RecBC-independent recombinational process of DNA repair. It may act with RecF and RecO. This is Recombination protein RecR from Amoebophilus asiaticus (strain 5a2).